The chain runs to 856 residues: Dual specificity protein kinase TTK (856 aa).

Methionine 1 carries the N-acetylmethionine modification. Position 32 is a phosphothreonine (threonine 32). A phosphoserine mark is found at serine 36, serine 277, and serine 342. A Phosphothreonine modification is found at threonine 380. Phosphoserine is present on residues serine 383, serine 435, and serine 454. The 267-residue stretch at 524 to 790 (YSILKQIGSG…IPELLTHPYV (267 aa)) folds into the Protein kinase domain. ATP-binding positions include 530–538 (IGSGGSSKV) and lysine 552. The active-site Proton acceptor is aspartate 646. Serine 820 carries the phosphoserine modification. The tract at residues 837–856 (CGEGQDSSSSKTFDKKRERK) is disordered.

This sequence belongs to the protein kinase superfamily. Ser/Thr protein kinase family. As to quaternary structure, interacts with TPR; the interactions occurs in a microtubule-independent manner. Interacts with MAD1L1 and MAD2L1. Autophosphorylated. Present in rapidly proliferating cell lines; high levels in testis, bone marrow, spleen and thymus. Low levels in brain, heart, lung and kidney.

It carries out the reaction L-seryl-[protein] + ATP = O-phospho-L-seryl-[protein] + ADP + H(+). It catalyses the reaction L-threonyl-[protein] + ATP = O-phospho-L-threonyl-[protein] + ADP + H(+). The catalysed reaction is L-tyrosyl-[protein] + ATP = O-phospho-L-tyrosyl-[protein] + ADP + H(+). Inhibited by the ATP-competitive kinase inhibitor, SP600125. In terms of biological role, involved in mitotic spindle assembly checkpoint signaling, a process that delays anaphase until chromosomes are bioriented on the spindle, and in the repair of incorrect mitotic kinetochore-spindle microtubule attachments. Phosphorylates MAD1L1 to promote the mitotic spindle assembly checkpoint. Phosphorylates CDCA8/Borealin leading to enhanced AURKB activity at the kinetochore. Phosphorylates SKA3 at 'Ser-34' leading to dissociation of the SKA complex from microtubules and destabilization of microtubule-kinetochore attachments. Phosphorylates KNL1, KNTC1 and autophosphorylates. Phosphorylates MCRS1 which enhances recruitment of KIF2A to the minus end of spindle microtubules and promotes chromosome alignment. The chain is Dual specificity protein kinase TTK (Ttk) from Mus musculus (Mouse).